A 359-amino-acid polypeptide reads, in one-letter code: Peptide chain release factor 1 (359 aa).

Q233 carries the post-translational modification N5-methylglutamine.

Belongs to the prokaryotic/mitochondrial release factor family. Post-translationally, methylated by PrmC. Methylation increases the termination efficiency of RF1.

It localises to the cytoplasm. Its function is as follows. Peptide chain release factor 1 directs the termination of translation in response to the peptide chain termination codons UAG and UAA. The protein is Peptide chain release factor 1 of Orientia tsutsugamushi (strain Boryong) (Rickettsia tsutsugamushi).